Reading from the N-terminus, the 458-residue chain is MQLRKMQTLKKEHGSVDTSSNVDKIMVLKSTLAEVSEELSTNEDILLTEASSGKSKSSACRRKREFIPDEKKDAMYWEKRRKNNEAAKRSREKRRLNDLVLENKLIALGEENATLKAELLSLKLKFGLISSASYAQEIQKLSSSTTVYFQDYQSSKPNINSFVDEHEPSVVGSSCISVIKHSPQSSMSDMSEMPSVEHTQGSRIQSNCRSPENKFQIIKQEPIELEREPRDDRGSYKASIYPNYMGTTFNMYSHSPPLLQVNRSSSNSPRTSETDDGVVGKSSDGEDEQQVPKGPIHSPVEHKNVHATVKVPEVNSSALPHKLRIKAKAMQVKVEAMDNDYDATQKLSSPIDMSSKRHFELEKHGAQNLVHSSHTPFSVQVTNIQDWSLKPELWHQKELNVKIQNGCKTGVVEIKDNVYNVSESENLYLKQGIANLSAEVASLKRLITTQQISASDSG.

Positions 73–136 (DAMYWEKRRK…GLISSASYAQ (64 aa)) constitute a bZIP domain. Residues 79-95 (KRRKNNEAAKRSREKRR) form a basic motif region. Residues 99–106 (LVLENKLI) are leucine-zipper. The residue at position 182 (Ser-182) is a Phosphoserine; by CSNK1E. Disordered regions lie at residues 218 to 238 (IKQEPIELEREPRDDRGSYKA) and 255 to 303 (SPPL…VEHK). Basic and acidic residues predominate over residues 221–235 (EPIELEREPRDDRGS). Positions 261-271 (VNRSSSNSPRT) are enriched in polar residues.

It belongs to the bZIP family. NFIL3 subfamily. Homodimer. Binds DNA as a dimer. Post-translationally, phosphorylated. Phosphorylated on Ser-182. Phosphorylation may require prime phosphorylation(s). Phosphorylation takes place at specific times of the day. Phosphorylation leads to its down-regulation through proteasome-dependent degradation.

It is found in the cytoplasm. The protein resides in the nucleus. Its function is as follows. Acts as a transcriptional regulator. Represses PER2 transcription through a recognition sequence in the promoter. Component of the circadian clock that may contribute to the rhythmic expression of PER2 gene in a light-dependent and time-of-day-dependent manner. The polypeptide is Nuclear factor interleukin-3-regulated protein (NFIL3) (Gallus gallus (Chicken)).